Consider the following 855-residue polypeptide: Pre-mRNA-splicing factor SYF1 (855 aa).

HAT repeat units lie at residues 15 to 47 (LVFE…FKQG), 48 to 80 (APKP…ARRA), 90 to 122 (PAYE…FLMD), 124 to 158 (GRVT…FLRS), 160 to 192 (PLPE…SSDR), 198 to 230 (QRLA…LISQ), 235 to 268 (VQSL…YYIR), 270 to 305 (GHFE…FEES), and 369 to 407 (GRPR…FYED). An N6-acetyllysine modification is found at K420. 5 HAT repeats span residues 498–530 (GTFQ…FLEE), 532–566 (KYFE…KFIA), 571–605 (RKLE…LEEE), 643–677 (YGVT…MECK), and 679–713 (GEID…FEVR). Residues 810 to 855 (LAQQVNPEEIQLGEDEDEDEMDLEPNEVRLEQQSVPAAVFGSLKED) are disordered. The segment covering 820–834 (QLGEDEDEDEMDLEP) has biased composition (acidic residues). S851 is modified (phosphoserine).

The protein belongs to the crooked-neck family. Associates with RNA polymerase II, the TCR-specific proteins CKN1/CSA and ERCC6/CSB, and XPA. Identified in the spliceosome C complex. Component of the XAB2 complex, a multimeric protein complex composed of XAB2, PRPF19, AQR, ZNF830, ISY1, and PPIE. Identified in a pentameric intron-binding (IB) complex composed of AQR, XAB2, ISY1, ZNF830 and PPIE that is incorporated into the spliceosome as a preassembled complex. The IB complex does not contain PRPF19.

The protein resides in the nucleus. Its function is as follows. Involved in pre-mRNA splicing as component of the spliceosome. Involved in transcription-coupled repair (TCR), transcription and pre-mRNA splicing. The sequence is that of Pre-mRNA-splicing factor SYF1 (XAB2) from Homo sapiens (Human).